The following is an 840-amino-acid chain: Cytosolic carboxypeptidase 2 (840 aa).

A Peptidase M14 domain is found at 358–628 (YPYTYTDLQC…HVCDTLLDFC (271 aa)). Zn(2+) is bound by residues His424, Glu427, and His520. The Proton donor/acceptor role is filled by Glu592. Basic residues predominate over residues 706 to 719 (MFKKKKKKSLQTRK). 2 disordered regions span residues 706 to 726 (MFKK…EQYQ) and 758 to 789 (ESSS…LDPS).

This sequence belongs to the peptidase M14 family. In terms of assembly, interacts with RARRES1, KIF11 and MAPRE1. It depends on Zn(2+) as a cofactor.

Its subcellular location is the cytoplasm. It localises to the cytosol. It is found in the cytoskeleton. The protein resides in the microtubule organizing center. The protein localises to the centrosome. Its subcellular location is the centriole. It localises to the cilium basal body. It carries out the reaction (L-glutamyl)(n+1)-gamma-L-glutamyl-L-glutamyl-[protein] + H2O = (L-glutamyl)(n)-gamma-L-glutamyl-L-glutamyl-[protein] + L-glutamate. With respect to regulation, inhibited by RARRES1. In terms of biological role, metallocarboxypeptidase that mediates deglutamylation of tubulin and non-tubulin target proteins. Catalyzes the removal of polyglutamate side chains present on the gamma-carboxyl group of glutamate residues within the C-terminal tail of tubulin protein. Specifically cleaves tubulin long-side-chains, while it is not able to remove the branching point glutamate. Also catalyzes the removal of polyglutamate residues from the carboxy-terminus of non-tubulin proteins such as MYLK. In Macaca fascicularis (Crab-eating macaque), this protein is Cytosolic carboxypeptidase 2 (AGBL2).